Here is a 61-residue protein sequence, read N- to C-terminus: UPF0434 protein PFL_1779 (61 aa).

Belongs to the UPF0434 family.

The polypeptide is UPF0434 protein PFL_1779 (Pseudomonas fluorescens (strain ATCC BAA-477 / NRRL B-23932 / Pf-5)).